The following is an 82-amino-acid chain: Neuromacin (82 aa).

A signal peptide spans 1 to 23; sequence MALLNKLLCFALVFMIFGEFVTP. Intrachain disulfides connect Cys25-Cys32, Cys47-Cys51, Cys61-Cys69, and Cys79-Cys81.

This sequence belongs to the macin family.

It localises to the secreted. This Hirudo medicinalis (Medicinal leech) protein is Neuromacin.